The primary structure comprises 425 residues: Serine--tRNA ligase (425 aa).

228–230 (TAE) is an L-serine binding site. 259 to 261 (RSE) serves as a coordination point for ATP. An L-serine-binding site is contributed by Glu282. 346-349 (EIAS) is an ATP binding site. Ser382 serves as a coordination point for L-serine.

It belongs to the class-II aminoacyl-tRNA synthetase family. Type-1 seryl-tRNA synthetase subfamily. In terms of assembly, homodimer. The tRNA molecule binds across the dimer.

It localises to the cytoplasm. It catalyses the reaction tRNA(Ser) + L-serine + ATP = L-seryl-tRNA(Ser) + AMP + diphosphate + H(+). The catalysed reaction is tRNA(Sec) + L-serine + ATP = L-seryl-tRNA(Sec) + AMP + diphosphate + H(+). It participates in aminoacyl-tRNA biosynthesis; selenocysteinyl-tRNA(Sec) biosynthesis; L-seryl-tRNA(Sec) from L-serine and tRNA(Sec): step 1/1. Functionally, catalyzes the attachment of serine to tRNA(Ser). Is also able to aminoacylate tRNA(Sec) with serine, to form the misacylated tRNA L-seryl-tRNA(Sec), which will be further converted into selenocysteinyl-tRNA(Sec). The protein is Serine--tRNA ligase of Rickettsia akari (strain Hartford).